Consider the following 153-residue polypeptide: MSDDIFLVTGGAGYIGSHTVIELINHGIKVVIADNLSNSSYDAVARIEFIVKQHVSHFIKVDIRNEKELNQVFSNHKISGVIHFAALKAVGESTKIPLEYYDNNVSGTIALLNVCKSNNVKTIVFSSSATVYGDVTRFGDNSMIPIPEHCPME.

A galactowaldenase region spans residues 1-153; the sequence is MSDDIFLVTG…IPIPEHCPME (153 aa).

In the N-terminal section; belongs to the NAD(P)-dependent epimerase/dehydratase family. The protein in the C-terminal section; belongs to the aldose epimerase family. NAD(+) serves as cofactor.

It carries out the reaction UDP-alpha-D-glucose = UDP-alpha-D-galactose. The enzyme catalyses alpha-D-glucose = beta-D-glucose. Its pathway is carbohydrate metabolism; galactose metabolism. The protein operates within carbohydrate metabolism; hexose metabolism. Mutarotase converts alpha-aldose to the beta-anomer. It is active on D-glucose, L-arabinose, D-xylose, D-galactose, maltose and lactose. The chain is Bifunctional protein GAL10 (GAL10) from Candida maltosa (Yeast).